The chain runs to 179 residues: Large ribosomal subunit protein uL5 (179 aa).

The protein belongs to the universal ribosomal protein uL5 family. In terms of assembly, part of the 50S ribosomal subunit; part of the 5S rRNA/L5/L18/L25 subcomplex. Contacts the 5S rRNA and the P site tRNA. Forms a bridge to the 30S subunit in the 70S ribosome.

In terms of biological role, this is one of the proteins that bind and probably mediate the attachment of the 5S RNA into the large ribosomal subunit, where it forms part of the central protuberance. In the 70S ribosome it contacts protein S13 of the 30S subunit (bridge B1b), connecting the 2 subunits; this bridge is implicated in subunit movement. Contacts the P site tRNA; the 5S rRNA and some of its associated proteins might help stabilize positioning of ribosome-bound tRNAs. This is Large ribosomal subunit protein uL5 from Dechloromonas aromatica (strain RCB).